Consider the following 415-residue polypeptide: tRNA(Met) cytidine acetate ligase (415 aa).

ATP contacts are provided by residues 7–20 (VVEYNPFHNGHLYH), Gly101, Asn162, and 187–188 (RI).

Belongs to the TmcAL family. In terms of assembly, homodimer.

The protein localises to the cytoplasm. The catalysed reaction is cytidine(34) in elongator tRNA(Met) + acetate + ATP = N(4)-acetylcytidine(34) in elongator tRNA(Met) + AMP + diphosphate. Functionally, catalyzes the formation of N(4)-acetylcytidine (ac(4)C) at the wobble position of elongator tRNA(Met), using acetate and ATP as substrates. First activates an acetate ion to form acetyladenylate (Ac-AMP) and then transfers the acetyl group to tRNA to form ac(4)C34. This chain is tRNA(Met) cytidine acetate ligase, found in Bacillus subtilis (strain 168).